The chain runs to 143 residues: Sirohydrochlorin cobaltochelatase (143 aa).

The active-site Proton acceptor is the His9. His9 provides a ligand contact to Co(2+). His9 provides a ligand contact to Ni(2+). Substrate is bound by residues Glu45 and 70–75 (LAHGIH). Co(2+) is bound at residue His75. His75 contributes to the Ni(2+) binding site.

The protein belongs to the CbiX family. CbiXS subfamily. As to quaternary structure, homotetramer; dimer of dimers.

It catalyses the reaction Co-sirohydrochlorin + 2 H(+) = sirohydrochlorin + Co(2+). It carries out the reaction Ni-sirohydrochlorin + 2 H(+) = sirohydrochlorin + Ni(2+). It functions in the pathway cofactor biosynthesis; adenosylcobalamin biosynthesis; cob(II)yrinate a,c-diamide from sirohydrochlorin (anaerobic route): step 1/10. Its function is as follows. Catalyzes the insertion of Co(2+) into sirohydrochlorin as part of the anaerobic pathway to cobalamin biosynthesis. Involved in the biosynthesis of the unique nickel-containing tetrapyrrole coenzyme F430, the prosthetic group of methyl-coenzyme M reductase (MCR), which plays a key role in methanogenesis and anaerobic methane oxidation. Catalyzes the insertion of Ni(2+) into sirohydrochlorin to yield Ni-sirohydrochlorin. The polypeptide is Sirohydrochlorin cobaltochelatase (Methanocaldococcus jannaschii (strain ATCC 43067 / DSM 2661 / JAL-1 / JCM 10045 / NBRC 100440) (Methanococcus jannaschii)).